We begin with the raw amino-acid sequence, 101 residues long: A-type ATP synthase subunit F (101 aa).

The protein belongs to the V-ATPase F subunit family. As to quaternary structure, has multiple subunits with at least A(3), B(3), C, D, E, F, H, I and proteolipid K(x).

It localises to the cell membrane. Component of the A-type ATP synthase that produces ATP from ADP in the presence of a proton gradient across the membrane. The polypeptide is A-type ATP synthase subunit F (Methanosarcina acetivorans (strain ATCC 35395 / DSM 2834 / JCM 12185 / C2A)).